The primary structure comprises 121 residues: MTRIKRGYIARKRRTKIRLFTSSFRGAHSRLTRTISQQKIKALVSAHRDRNRKKREFRGLWISRINAGIGDNDKKKNIYYSYSNFMYNLYKKQLLLNRKIVAQIAIFKGNCLFMIANEIIT.

It belongs to the bacterial ribosomal protein bL20 family.

It localises to the plastid. Its subcellular location is the chloroplast. In terms of biological role, binds directly to 23S ribosomal RNA and is necessary for the in vitro assembly process of the 50S ribosomal subunit. It is not involved in the protein synthesizing functions of that subunit. This chain is Large ribosomal subunit protein bL20c, found in Lotus japonicus (Lotus corniculatus var. japonicus).